Reading from the N-terminus, the 207-residue chain is Reticulon-1-A (207 aa).

The Reticulon domain occupies Ala-21–Glu-207. A run of 2 helical transmembrane segments spans residues Ile-35–Val-55 and Val-139–Met-159.

As to expression, expressed in the animal hemisphere (presumptive neural ectoderm) of blastula and gastrula stage embryos, and along the anterior neural border, in the panplacodal primordium, and in the dorsolateral side of archenteron roof of late neurula embryos. At the tailbud stage, expression localizes to the central nervous system, including the spinal cord, prosencephalon, mesencephalon and rhombencephalon, as well as the lateral line placode, otic vesicle and pronephros.

Its subcellular location is the endoplasmic reticulum membrane. It localises to the nucleus. Functionally, inhibits amyloid precursor protein processing, probably by blocking BACE1 activity. This Xenopus laevis (African clawed frog) protein is Reticulon-1-A (rtn1-a).